The following is a 219-amino-acid chain: Probable N-acetyltransferase camello (219 aa).

The next 2 helical transmembrane spans lie at 44–64 and 66–86; these read FITFVAFTSVFMGTGSYVLAL and SLVALLAAGWYGLYSEFHGLA. Residues 62-211 form the N-acetyltransferase domain; that stretch reads LALTSLVALL…VHQYTSFTVA (150 aa).

This sequence belongs to the camello family.

It localises to the golgi apparatus membrane. Its function is as follows. Plays a role in regulation of gastrulation, possibly by controlled reduction of cell adhesion in the periblastopore region which is necessary for optimal cell motility. This chain is Probable N-acetyltransferase camello, found in Xenopus tropicalis (Western clawed frog).